The chain runs to 550 residues: Putative golgin subfamily A member 6-like protein 19 (550 aa).

The span at 1–11 shows a compositional bias: pro residues; sequence MWPQPRLPPHP. The interval 1 to 77 is disordered; it reads MWPQPRLPPH…DSATGVYGEG (77 aa). Positions 51-62 are enriched in polar residues; that stretch reads NGSSPDTATSGG. Residues 157 to 405 are a coiled coil; the sequence is SKVEQLQDET…QERLRQQDER (249 aa). The segment covering 467 to 480 has biased composition (basic and acidic residues); that stretch reads KELEKSGGAEEPRG. The disordered stretch occupies residues 467–529; sequence KELEKSGGAE…VGTGEAAGGA (63 aa). Low complexity-rich tracts occupy residues 484–499 and 517–529; these read AAAA…PQGA and GEAV…AGGA.

It belongs to the GOLGA6 family.

In Homo sapiens (Human), this protein is Putative golgin subfamily A member 6-like protein 19 (GOLGA6L19).